The chain runs to 234 residues: Coiled-coil domain-containing protein 194 (234 aa).

Residues 1 to 42 (MAEPGPEPGRAWRVLALCGVAVFLAAAAAGGALVAWNLAASA) form the signal peptide. Disordered stretches follow at residues 44–67 (RGPR…PGVD) and 187–234 (VLEA…RARG). Residues 66 to 163 (VDDLRRRLAE…TRRLDEALRR (98 aa)) adopt a coiled-coil conformation. The span at 187-196 (VLEAEMSPQR) shows a compositional bias: low complexity. Over residues 197–217 (RVPRPRPRSGSRPRPSPRSRS) the composition is skewed to basic residues.

This is Coiled-coil domain-containing protein 194 from Homo sapiens (Human).